Reading from the N-terminus, the 529-residue chain is MTQTLLAIENLSVGFRHQQTVRTVVNDVSLQIEAGETLALVGESGSGKSVTALSILRLLPSPPVEYLSGDIRFHGESLLHASDQTLRGVRGNKIAMIFQEPMVSLNPLHTLEKQLYEVLSLHRGMRREAARGEILNCLDRVGIRQAAKRLTDYPHQLSGGERQRVMIAMALLTRPELLIADEPTTALDVSVQAQILQLLRELQGELNMGMLFITHNLSIVRKLAHRVAVMQNGRCVEQNYAATLFASPTHPYTQKLLNSEPSGDPVPLPEPASTLLDVEQLQVAFPIRKGILKRIVDHNVVVKNISFTLRAGETLGLVGESGSGKSTTGLALLRLINSQGSIIFDGQPLQNLNRRQLLPIRHRIQVVFQDPNSSLNPRLNVLQIIEEGLRVHQPTLSAAQREQQVIAVMHEVGLDPETRHRYPAEFSGGQRQRIAIARALILKPSLIILDEPTSSLDKTVQAQILTLLKSLQQKHQLAYLFISHDLHVVRALCHQVIILRQGEVVEQGPCARVFATPQQEYTRQLLALS.

2 ABC transporter domains span residues 6–257 (LAIE…QKLL) and 287–526 (IRKG…RQLL). Residues 42-49 (GESGSGKS) and 319-326 (GESGSGKS) each bind ATP.

This sequence belongs to the ABC transporter superfamily.

This is an uncharacterized protein from Escherichia coli (strain K12).